The following is a 270-amino-acid chain: NADPH-dependent aldehyde reductase-like protein, chloroplastic (270 aa).

A chloroplast-targeting transit peptide spans 1–53 (MSTHSSISQPPLPLAGRVAIVTGSSRGIGRAIAIHLAELGARIVINYTSKAAD). An NADP(+)-binding site is contributed by 26–50 (RGIGRAIAIHLAELGARIVINYTSK). Position 165 (S165) interacts with substrate. Y178 functions as the Proton acceptor in the catalytic mechanism.

It belongs to the short-chain dehydrogenases/reductases (SDR) family.

Its subcellular location is the plastid. The protein resides in the chloroplast. Aldehyde reductase that catalyzes the reduction of the aldehyde carbonyl groups on saturated and alpha,beta-unsaturated aldehydes with more than 5 carbons. The protein is NADPH-dependent aldehyde reductase-like protein, chloroplastic of Arabidopsis thaliana (Mouse-ear cress).